The following is a 257-amino-acid chain: Tryptophan synthase alpha chain (257 aa).

Residues Glu44 and Asp55 each act as proton acceptor in the active site.

The protein belongs to the TrpA family. As to quaternary structure, tetramer of two alpha and two beta chains.

The catalysed reaction is (1S,2R)-1-C-(indol-3-yl)glycerol 3-phosphate + L-serine = D-glyceraldehyde 3-phosphate + L-tryptophan + H2O. The protein operates within amino-acid biosynthesis; L-tryptophan biosynthesis; L-tryptophan from chorismate: step 5/5. Its function is as follows. The alpha subunit is responsible for the aldol cleavage of indoleglycerol phosphate to indole and glyceraldehyde 3-phosphate. This is Tryptophan synthase alpha chain from Chlamydia caviae (strain ATCC VR-813 / DSM 19441 / 03DC25 / GPIC) (Chlamydophila caviae).